A 1103-amino-acid polypeptide reads, in one-letter code: Mediator of RNA polymerase II transcription subunit 14 (1103 aa).

Disordered regions lie at residues 1-63 (MPGV…GYKQ), 120-140 (VPPQ…LGNQ), and 1054-1103 (LETK…ITID). A compositionally biased stretch (polar residues) spans 1073-1103 (SGNTVQNARLENKSPQKAAATHSNADVITID).

It belongs to the Mediator complex subunit 14 family. Component of the Mediator complex.

The protein resides in the nucleus. In terms of biological role, component of the Mediator complex, a coactivator involved in the regulated transcription of nearly all RNA polymerase II-dependent genes. Mediator functions as a bridge to convey information from gene-specific regulatory proteins to the basal RNA polymerase II transcription machinery. Mediator is recruited to promoters by direct interactions with regulatory proteins and serves as a scaffold for the assembly of a functional preinitiation complex with RNA polymerase II and the general transcription factors. The sequence is that of Mediator of RNA polymerase II transcription subunit 14 (rgr1) from Aspergillus terreus (strain NIH 2624 / FGSC A1156).